A 1032-amino-acid chain; its full sequence is Exo-beta-D-glucosaminidase (1032 aa).

The first 32 residues, 1–32 (MSFRQKRTRIPLLAMTVTALAAAVCGVTTAPA), serve as a signal peptide directing secretion. A propeptide spanning residues 33–46 (ATGAEVAVPLSVGA) is cleaved from the precursor. Residue Asp-469 is the Proton donor of the active site. Glu-541 acts as the Nucleophile in catalysis. Residues 883–908 (SVRISGWNTGTQTVPADGSGPGPSDP) form a disordered region. Residues 909-1032 (VDYQAEDATI…GGPNVDKITL (124 aa)) form the CBM6 domain.

Belongs to the glycosyl hydrolase 2 family. In terms of assembly, monomer.

The protein resides in the secreted. It carries out the reaction Hydrolysis of chitosan or chitosan oligosaccharides to remove successive D-glucosamine residues from the non-reducing termini.. Functionally, hydrolyzes chitosan and chitooligosaccharides with retention of anomeric configuration. Has maximum activity on chitotetraose, chitopentaose and their corresponding alcohols, with a slight decrease in the rate of hydrolysis on longer chains. Has no activity against beta-D-glucopyranoside, beta-D-xylopyranoside, beta-D-mannoside, beta-D-glucuronide, beta-D-galactoside, beta-D-N-acetylgalactosamide, beta-D-N-acetylglucosaminide and alpha-D-N-acetylglucosaminide. The sequence is that of Exo-beta-D-glucosaminidase from Amycolatopsis orientalis (Nocardia orientalis).